The chain runs to 226 residues: Adenosine 5'-phosphosulfate reductase (226 aa).

4 residues coordinate [4Fe-4S] cluster: Cys-112, Cys-113, Cys-195, and Cys-198. Cys-221 serves as the catalytic Nucleophile; cysteine thiosulfonate intermediate.

This sequence belongs to the PAPS reductase family. CysH subfamily. [4Fe-4S] cluster is required as a cofactor.

It is found in the cytoplasm. It carries out the reaction [thioredoxin]-disulfide + sulfite + AMP + 2 H(+) = adenosine 5'-phosphosulfate + [thioredoxin]-dithiol. The protein operates within sulfur metabolism; hydrogen sulfide biosynthesis; sulfite from sulfate. Catalyzes the formation of sulfite from adenosine 5'-phosphosulfate (APS) using thioredoxin as an electron donor. This is Adenosine 5'-phosphosulfate reductase from Bacillus anthracis (strain A0248).